Consider the following 177-residue polypeptide: uncharacterized protein (177 aa).

The protein to Synechocystis PCC 6803 slr1290 and sll0925.

This is an uncharacterized protein from Synechocystis sp. (strain ATCC 27184 / PCC 6803 / Kazusa).